We begin with the raw amino-acid sequence, 88 residues long: RNA-binding protein Hfq (88 aa).

Positions 10-70 (DRFLNILRTK…ISTILPAEYI (61 aa)) constitute a Sm domain.

This sequence belongs to the Hfq family. In terms of assembly, homohexamer.

RNA chaperone that binds small regulatory RNA (sRNAs) and mRNAs to facilitate mRNA translational regulation in response to envelope stress, environmental stress and changes in metabolite concentrations. Also binds with high specificity to tRNAs. This is RNA-binding protein Hfq from Fervidobacterium nodosum (strain ATCC 35602 / DSM 5306 / Rt17-B1).